The following is a 627-amino-acid chain: MAGKISKEELEELREAFGKVDLNGNGFICDHELHDLFKEANLPLPGYKVREIIQKLMEEGDKNKDNMISFDEFVSIFQELKSGDIAKSFRKAINRKEGILAIGGTSELSSAGTQHSFSEEERFAFVNWINTALEHDPDCKHKLPMNPNTDALFKAVGDGIVLCKMINLSVPDTIDERTINKKKLTPFTIQENLNLALNSASAIGCHVVNIGALDLREGKPHLVLGLLWQIIKIGLFADIELSRNEALAALLRDGETLEDLMKLSPEELLLRWANFHLENAGWSKINNFSHDIKDSRAYFHLLNQIAPKGQKDGESRIDIDMSGFTEKDDLKRAECMLLQADKLGCRQFVTSTDVMSGNPKLNLAFVANLFNKYPALTKPENQDINWGLLEGETREERTFRNWMNSLGVNPHVNHLYGDLQDALVILQLYEKIKVPVDWNNKVNKPPYPKLGANMKKLENCNYAVELGKTKANFSLVGIGGQDLNDGNPTLTLALVWQLMRRYTLNVLENLGDGQKVNDDVIVSWVNKTLSQAGKSTKISNFKDKEISSSLAVLDLIDAIQPSSINYDLVKRGSLSDGDKLDNAKYAVSMARKIGARVYALPEDLVEVKPKMVMTVFACLMGRGMKRA.

EF-hand domains lie at 8–43 (EELE…ANLP) and 48–83 (KVRE…LKSG). Residues D21, N23, N25, E32, D61, N63, D65, M67, and E72 each coordinate Ca(2+). Actin-binding stretches follow at residues 105-378 (TSEL…ALTK) and 379-624 (PENQ…GRGM). Calponin-homology (CH) domains are found at residues 119–235 (EEER…KIGL), 263–374 (LSPE…NKYP), 393–503 (TREE…RRYT), and 515–624 (KVND…GRGM).

It localises to the cytoplasm. Functionally, actin-bundling protein. In Danio rerio (Zebrafish), this protein is Plastin-3 (pls3).